The chain runs to 830 residues: Ribosome biogenesis protein ERB1 (830 aa).

A disordered region spans residues Met1–Leu142. Composition is skewed to acidic residues over residues Val35–Gly44 and Met52–Ser109. The segment covering Glu131–Leu142 has biased composition (basic and acidic residues). 6 WD repeats span residues Pro481–Arg520, Leu523–Ile563, Lys660–Thr698, Ser701–Lys740, Tyr744–Gln783, and Ile799–Ser830.

It belongs to the WD repeat BOP1/ERB1 family. As to quaternary structure, component of the NOP7 complex, composed of ERB1, NOP7 and YTM1. The complex is held together by ERB1, which interacts with NOP7 via its N-terminal domain and with YTM1 via a high-affinity interaction between the seven-bladed beta-propeller domains of the 2 proteins. The NOP7 complex associates with the 66S pre-ribosome.

It is found in the nucleus. The protein localises to the nucleolus. Its subcellular location is the nucleoplasm. Component of the NOP7 complex, which is required for maturation of the 25S and 5.8S ribosomal RNAs and formation of the 60S ribosome. The sequence is that of Ribosome biogenesis protein ERB1 from Cryptococcus neoformans var. neoformans serotype D (strain JEC21 / ATCC MYA-565) (Filobasidiella neoformans).